A 674-amino-acid polypeptide reads, in one-letter code: Penicillin-binding protein activator LpoA (674 aa).

An N-terminal signal peptide occupies residues 1 to 31 (MLSSTFVRTKAGRSKPVRLTAVIAAALFLAG). Cys-32 is lipidated: N-palmitoyl cysteine. A lipid anchor (S-diacylglycerol cysteine) is attached at Cys-32. Residues 291 to 349 (GVTPSTPVQQQQPASVPEQAAQPASTDPNANGAVSTSAPDAAPVTAAQPSAPSTAPITP) form a disordered region. The segment covering 292–315 (VTPSTPVQQQQPASVPEQAAQPAS) has biased composition (low complexity). Residues 316–328 (TDPNANGAVSTSA) show a composition bias toward polar residues. Residues 331–349 (AAPVTAAQPSAPSTAPITP) show a composition bias toward low complexity.

Belongs to the LpoA family. Interacts with PBP1a.

It localises to the cell outer membrane. Functionally, regulator of peptidoglycan synthesis that is essential for the function of penicillin-binding protein 1A (PBP1a). In Serratia proteamaculans (strain 568), this protein is Penicillin-binding protein activator LpoA.